Here is a 685-residue protein sequence, read N- to C-terminus: Twinkle mtDNA helicase (685 aa).

The N-terminal 31 residues, 1–31 (MWLLLRRAYPLRILLPLRGEWVGRRGLPRSL), are a transit peptide targeting the mitochondrion. The tract at residues 1-122 (MWLLLRRAYP…LCMTSLAEGS (122 aa)) is contributes to single strand DNA binding activity. Positions 54-214 (PVTTTEIRQY…LVFPWFTPGS (161 aa)) are N-terminal region (NTR). Residues 122–373 (SWEDLQASVE…WHKSIVSFRQ (252 aa)) form a required for hexamers formation and DNA helicase activity region. Positions 215-335 (SGLRGLKLLG…LNPKRCSLVR (121 aa)) are primase-like domain. An SF4 helicase domain is found at 385-636 (VEQAAGVRWS…LTFSIPPKSK (252 aa)). The interval 406 to 591 (HRKGELTVFT…QEADNVLILQ (186 aa)) is maybe required for stable oligomeric structure. 416–423 (GPTGSGKT) is an ATP binding site. The stretch at 454–482 (RVMLTQFAVTRLEEQLDKYEEWADRFEDL) forms a coiled coil. The interval 641 to 685 (KIKDDNGLVAKKSSSGKKGAAHQNPEICLGQDPSPAQPDTSKSSG) is might negatively regulate ATPase activity. The segment at 642–685 (IKDDNGLVAKKSSSGKKGAAHQNPEICLGQDPSPAQPDTSKSSG) is disordered.

In terms of assembly, homohexamer (via C-terminus), which assembles in a ring-like structure. Homoheptamer, which assembles in a ring-like structure. Homooctamer, which assembles in a ring-like structure. Oligomers may sequentially eject two monomers (octamer&gt;heptamer&gt;hexamer) upon DNA binding. Oligomerization is Mg(2+), nucleotide and DNA-independent, however, Mg(2+) and nucleotide stabilize the homohexameric form. Interacts with POLG in vitro. Interacts with LONP1. Ubiquitous with the highest levels in the liver, heart and kidneys. The skeletal muscle, brain and testis showed lower but detectable expression. Expression is coregulated with MRPL43.

It localises to the mitochondrion matrix. The protein resides in the mitochondrion nucleoid. The protein localises to the mitochondrion inner membrane. The catalysed reaction is ATP + H2O = ADP + phosphate + H(+). It carries out the reaction Couples ATP hydrolysis with the unwinding of duplex DNA at the replication fork by translocating in the 5'-3' direction. This creates two antiparallel DNA single strands (ssDNA). The leading ssDNA polymer is the template for DNA polymerase III holoenzyme which synthesizes a continuous strand.. Functionally, mitochondrial helicase involved in mtDNA replication and repair. Might have a role in mtDNA repair. Has DNA strand separation activity needed to form a processive replication fork for leading strand synthesis which is catalyzed by the formation of a replisome complex with POLG and mtSDB. Preferentially unwinds DNA substrates with pre-existing 5'-and 3'- single-stranded tails but is also active on a 5'- flap substrate. Can dissociate the invading strand of immobile or mobile D-loop DNA structures irrespective of the single strand polarity of the third strand. In addition to its DNA strand separation activity, also has DNA strand annealing, DNA strand-exchange and DNA branch migration activities. In Mus musculus (Mouse), this protein is Twinkle mtDNA helicase.